A 361-amino-acid polypeptide reads, in one-letter code: Outer mitochondrial transmembrane helix translocase (361 aa).

Topologically, residues Met-1–Glu-15 are mitochondrial intermembrane. The helical transmembrane segment at Val-16–Phe-32 threads the bilayer. Over Thr-33–Asp-361 the chain is Cytoplasmic. ATP is bound at residue Gly-133–Thr-140. Ser-322 bears the Phosphoserine mark.

This sequence belongs to the AAA ATPase family. MSP1 subfamily. In terms of assembly, interacts with GRIA2 and GRIP1 in an ATP-dependent manner. ATAD1-catalyzed ATP hydrolysis disrupts not only its binding to GRIA2 and GRIP1, but also interaction between GRIP1 and GRIA2, leading to AMPAR complex disassembly.

Its subcellular location is the mitochondrion outer membrane. It is found in the peroxisome membrane. The protein localises to the postsynaptic cell membrane. The enzyme catalyses [protein]-with a C-terminal TM segment(out) + ATP + H2O = [protein]-with a C-terminal TM segment(in) + ADP + phosphate + H(+). Its function is as follows. Outer mitochondrial translocase required to remove mislocalized tail-anchored transmembrane proteins on mitochondria. Specifically recognizes and binds tail-anchored transmembrane proteins: acts as a dislocase that mediates the ATP-dependent extraction of mistargeted tail-anchored transmembrane proteins from the mitochondrion outer membrane. Also plays a critical role in regulating the surface expression of AMPA receptors (AMPAR), thereby regulating synaptic plasticity and learning and memory. Required for NMDA-stimulated AMPAR internalization and inhibition of GRIA1 and GRIA2 recycling back to the plasma membrane; these activities are ATPase-dependent. The protein is Outer mitochondrial transmembrane helix translocase of Bos taurus (Bovine).